Consider the following 212-residue polypeptide: Ribosomal RNA small subunit methyltransferase G (212 aa).

S-adenosyl-L-methionine is bound by residues Gly-80, Leu-85, 131–132 (AE), and Arg-146.

It belongs to the methyltransferase superfamily. RNA methyltransferase RsmG family.

It is found in the cytoplasm. The catalysed reaction is guanosine(527) in 16S rRNA + S-adenosyl-L-methionine = N(7)-methylguanosine(527) in 16S rRNA + S-adenosyl-L-homocysteine. Its function is as follows. Specifically methylates the N7 position of guanine in position 527 of 16S rRNA. In Xanthomonas campestris pv. campestris (strain B100), this protein is Ribosomal RNA small subunit methyltransferase G.